The sequence spans 250 residues: Proteasome subunit alpha (250 aa).

Belongs to the peptidase T1A family. The 20S proteasome core is composed of 14 alpha and 14 beta subunits that assemble into four stacked heptameric rings, resulting in a barrel-shaped structure. The two inner rings, each composed of seven catalytic beta subunits, are sandwiched by two outer rings, each composed of seven alpha subunits. The catalytic chamber with the active sites is on the inside of the barrel. Has a gated structure, the ends of the cylinder being occluded by the N-termini of the alpha-subunits. Is capped at one or both ends by the proteasome regulatory ATPase, PAN.

It localises to the cytoplasm. With respect to regulation, the formation of the proteasomal ATPase PAN-20S proteasome complex, via the docking of the C-termini of PAN into the intersubunit pockets in the alpha-rings, triggers opening of the gate for substrate entry. Interconversion between the open-gate and close-gate conformations leads to a dynamic regulation of the 20S proteasome proteolysis activity. Functionally, component of the proteasome core, a large protease complex with broad specificity involved in protein degradation. In Methanobrevibacter smithii (strain ATCC 35061 / DSM 861 / OCM 144 / PS), this protein is Proteasome subunit alpha.